The primary structure comprises 510 residues: Archaeosine synthase subunit alpha (510 aa).

Positions 427–510 (LGKFTINKAS…LKKGIAVKVR (84 aa)) constitute a PUA domain.

Belongs to the archaeosine synthase type 1 family. In terms of assembly, forms a robust complex with the archaeosine synthase beta subunit RaSEA, likely an alpha(2)beta(2) heterotetrameric structure. Formation of this complex highly increases lysine transfer activity.

The enzyme catalyses 7-cyano-7-carbaguanosine(15) in tRNA + L-lysine = 7-N-[(5S)-5-amino-5-carboxypentyl]formamidino-7-deazaguanosine(15) in tRNA. It functions in the pathway tRNA modification; archaeosine-tRNA biosynthesis. Functionally, functions in the biosynthesis of archaeosine, a modified nucleoside present in the dihydrouridine loop (D-loop) of archaeal tRNAs. Catalyzes the addition of L-lysine to the cyano group of 7-cyano-7-deazaguanine (preQ0)-modified tRNAs at position 15, to generate q0kN15-tRNA, a q0N lysine adduct identified as 7-N-[(5S)-5-amino-5-carboxypentyl]formamidino-7-deazaguanosine. This is Archaeosine synthase subunit alpha from Thermoplasma acidophilum (strain ATCC 25905 / DSM 1728 / JCM 9062 / NBRC 15155 / AMRC-C165).